Reading from the N-terminus, the 330-residue chain is Induced myeloid leukemia cell differentiation protein Mcl-1 homolog (330 aa).

The segment at 85–155 is PEST-like; that stretch reads LAVPPEEMAA…PPEEEDDELY (71 aa). Residue serine 101 is modified to Phosphoserine. Lysine 116 participates in a covalent cross-link: Glycyl lysine isopeptide (Lys-Gly) (interchain with G-Cter in ubiquitin). A disordered region spans residues 129-153; that stretch reads EAAKSSGADGSLPSTPPPPEEEDDE. Serine 139 is modified (phosphoserine; by GSK3-alpha and GSK3-beta). Serine 142 is modified (phosphoserine). Threonine 143 carries the phosphothreonine; by MAPK modification. Residues lysine 174 and lysine 177 each participate in a glycyl lysine isopeptide (Lys-Gly) (interchain with G-Cter in ubiquitin) cross-link. The short motif at 189-203 is the BH3 element; sequence ALETLRRVGDGVQRN. A BH1 motif is present at residues 232 to 252; sequence HVFKDGVTNWGRIVTLISFGA. The BH2 signature appears at 284-299; the sequence is DWLVKQRGWDGFVEFF. The helical transmembrane segment at 307-329 threads the bilayer; the sequence is GIRNVLLAFAGVAGVGAGLAYLI.

The protein belongs to the Bcl-2 family. In terms of assembly, interacts with HIF3A (via C-terminus domain). Interacts with BOK, BIK, BAX, BAK1, and TPT1. Interacts with unphosphorylated BAD. Interacts with BMF, BBC3 and PMAIP1. Interacts with BOP. Interacts with BCL2L11; may sequester BCL2L11 to prevent its pro-apoptotic activity. Interacts with GIMAP5 and HSPA8/HSC70; the interaction between HSPA8 and MCL1 is impaired in the absence of GIMAP5. Cleaved by CASP3 during apoptosis, yielding a pro-apoptotic C-terminal fragment. Post-translationally, rapidly degraded in the absence of phosphorylation in the PEST region. In terms of processing, phosphorylated on Ser-139, by GSK3, in response to IL3/interleukin-3 withdrawal. Phosphorylation at Ser-139 induces ubiquitination and proteasomal degradation, abrogating the anti-apoptotic activity. Treatment with taxol or okadaic acid induces phosphorylation on additional sites. Ubiquitinated. Ubiquitination is induced by phosphorylation at Ser-139. Deubiquitinated by USP20; leading to increased stability. In terms of tissue distribution, ubiquitous. Highly expressed in heart, spleen, lung, liver, skeletal muscle and kidney. Detected at lower levels in brain, ovary, oviduct and testis.

It is found in the membrane. The protein resides in the cytoplasm. It localises to the mitochondrion. The protein localises to the nucleus. Its subcellular location is the nucleoplasm. Functionally, involved in the regulation of apoptosis versus cell survival, and in the maintenance of viability but not of proliferation. Mediates its effects by interactions with a number of other regulators of apoptosis. The protein is Induced myeloid leukemia cell differentiation protein Mcl-1 homolog (Mcl1) of Rattus norvegicus (Rat).